A 158-amino-acid chain; its full sequence is Transcriptional regulator MraZ (158 aa).

SpoVT-AbrB domains lie at 5 to 50 (IYET…GGVY) and 91 to 134 (AVEC…SQSE).

It belongs to the MraZ family. In terms of assembly, forms oligomers.

It is found in the cytoplasm. The protein localises to the nucleoid. In Geobacter metallireducens (strain ATCC 53774 / DSM 7210 / GS-15), this protein is Transcriptional regulator MraZ.